A 277-amino-acid polypeptide reads, in one-letter code: MKLKGEAVLITGGASGLGRALVDRFVAEGAKVAVLDKSAERLAELETDHGDNVLGIVGDVRSLEDQKQAASRCVARFGKIDTLIPNAGIWDYSTALVDLPEESLDAAFDEVFHINVKGYIHAVKACLPALVASRGNVIFTISNAGFYPNGGGPLYTAAKHAIVGLVRELAFELAPYVRVNGVGSGGINSDLRGPSSLGMGSKAISTVPLADMLKSVLPIGRMPEVEEYTGAYVFFATRGDAAPATGALLNYDGGLGVRGFFSGAGGNDLLEQLNIHP.

Residues 9-36 and Asp59 each bind NAD(+); that span reads LITG…AVLD. Residue Ser142 participates in substrate binding. Tyr155 functions as the Proton acceptor in the catalytic mechanism. NAD(+) is bound at residue Lys159.

Belongs to the short-chain dehydrogenases/reductases (SDR) family.

The enzyme catalyses (2R,3S)-3-phenylcyclohexa-3,5-diene-1,2-diol + NAD(+) = biphenyl-2,3-diol + NADH + H(+). It participates in xenobiotic degradation; biphenyl degradation; 2-hydroxy-2,4-pentadienoate and benzoate from biphenyl: step 2/4. This chain is Cis-2,3-dihydrobiphenyl-2,3-diol dehydrogenase (bphB), found in Paraburkholderia xenovorans (strain LB400).